The following is a 255-amino-acid chain: Adenosine 5'-phosphosulfate reductase (255 aa).

Residues 1–39 (MMTAEVRTPEQGGGPLTTEPRAPRSAPGHADASAPAFGP) form a disordered region. [4Fe-4S] cluster contacts are provided by cysteine 137, cysteine 138, cysteine 220, and cysteine 223. Residue cysteine 246 is the Nucleophile; cysteine thiosulfonate intermediate of the active site.

The protein belongs to the PAPS reductase family. CysH subfamily. The cofactor is [4Fe-4S] cluster.

It is found in the cytoplasm. It catalyses the reaction [thioredoxin]-disulfide + sulfite + AMP + 2 H(+) = adenosine 5'-phosphosulfate + [thioredoxin]-dithiol. The protein operates within sulfur metabolism; hydrogen sulfide biosynthesis; sulfite from sulfate. Its function is as follows. Catalyzes the formation of sulfite from adenosine 5'-phosphosulfate (APS) using thioredoxin as an electron donor. This is Adenosine 5'-phosphosulfate reductase from Deinococcus radiodurans (strain ATCC 13939 / DSM 20539 / JCM 16871 / CCUG 27074 / LMG 4051 / NBRC 15346 / NCIMB 9279 / VKM B-1422 / R1).